The following is a 351-amino-acid chain: 1-acylglycerol-3-phosphate O-acyltransferase ABHD5 (351 aa).

Residues 79-184 (PLVLLHGFGG…LILVEPWGFP (106 aa)) form the AB hydrolase-1 domain. The residue at position 124 (Ser124) is a Phosphoserine. The HXXXXD motif motif lies at 329–334 (HYVYAD).

It belongs to the peptidase S33 family. ABHD4/ABHD5 subfamily. In terms of assembly, interacts with ADRP. Interacts with PLIN. Interacts with and PNPLA2. Interacts with PLIN5; promotes interaction with PNPLA2. Highly expressed in the adipose tissue and testes. Weakly expressed in the liver, muscle, kidney, and heart. Expressed by upper epidermal layers and dermal fibroblasts in skin, hepatocytes and hypothalamus in brain (at protein level).

It is found in the cytoplasm. The protein resides in the lipid droplet. It localises to the cytosol. It carries out the reaction a 1-acyl-sn-glycero-3-phosphate + an acyl-CoA = a 1,2-diacyl-sn-glycero-3-phosphate + CoA. It catalyses the reaction 1-(9Z-octadecenoyl)-sn-glycero-3-phosphate + (9Z)-octadecenoyl-CoA = 1,2-di-(9Z-octadecenoyl)-sn-glycero-3-phosphate + CoA. The catalysed reaction is 1-(9Z-octadecenoyl)-sn-glycero-3-phosphate + hexadecanoyl-CoA = 1-(9Z)-octadecenoyl-2-hexadecanoyl-sn-glycero-3-phosphate + CoA. The enzyme catalyses 1-(9Z-octadecenoyl)-sn-glycero-3-phosphate + octadecanoyl-CoA = 1-(9Z-octadecenoyl)-2-octadecanoyl-sn-glycero-3-phosphate + CoA. It carries out the reaction 1-(9Z-octadecenoyl)-sn-glycero-3-phosphate + (5Z,8Z,11Z,14Z)-eicosatetraenoyl-CoA = 1-(9Z)-octadecenoyl-2-(5Z,8Z,11Z,14Z)-eicosatetraenoyl-sn-glycero-3-phosphate + CoA. It catalyses the reaction eicosanoyl-CoA + 1-(9Z-octadecenoyl)-sn-glycero-3-phosphate = 1-(9Z)-octadecenoyl-2-eicosanoyl-sn-glycero-3-phosphate + CoA. The catalysed reaction is 1-hexadecanoyl-sn-glycero-3-phosphate + (9Z)-octadecenoyl-CoA = 1-hexadecanoyl-2-(9Z-octadecenoyl)-sn-glycero-3-phosphate + CoA. The enzyme catalyses 1-octadecanoyl-sn-glycero-3-phosphate + (9Z)-octadecenoyl-CoA = 1-octadecanoyl-2-(9Z-octadecenoyl)-sn-glycero-3-phosphate + CoA. It carries out the reaction 1-(5Z,8Z,11Z,14Z-eicosatetraenoyl)-sn-glycero-3-phosphate + (9Z)-octadecenoyl-CoA = 1-(5Z,8Z,11Z,14Z)-eicosatetraenoyl-2-(9Z)-octadecenoyl-sn-glycero-3-phosphate + CoA. Acyltransferase activity is inhibited by detergents such as Triton X-100 and 3-[(3-cholamidopropyl)dimethylammonio]-1-propanesulfonate (CHAPS). Acyltransferase activity is inhibited by the presence of magnesium and calcium. Its function is as follows. Coenzyme A-dependent lysophosphatidic acid acyltransferase that catalyzes the transfer of an acyl group on a lysophosphatidic acid. Functions preferentially with 1-oleoyl-lysophosphatidic acid followed by 1-palmitoyl-lysophosphatidic acid, 1-stearoyl-lysophosphatidic acid and 1-arachidonoyl-lysophosphatidic acid as lipid acceptor. Functions preferentially with arachidonoyl-CoA followed by oleoyl-CoA as acyl group donors. Functions in phosphatidic acid biosynthesis. May regulate the cellular storage of triacylglycerol through activation of the phospholipase PNPLA2. Involved in keratinocyte differentiation. Regulates lipid droplet fusion. This Mus musculus (Mouse) protein is 1-acylglycerol-3-phosphate O-acyltransferase ABHD5.